A 56-amino-acid polypeptide reads, in one-letter code: Large ribosomal subunit protein bL33 (56 aa).

This sequence belongs to the bacterial ribosomal protein bL33 family.

This chain is Large ribosomal subunit protein bL33, found in Marinomonas sp. (strain MWYL1).